We begin with the raw amino-acid sequence, 465 residues long: FAD-dependent monooxygenase penM (465 aa).

Residues 5–25 form a helical membrane-spanning segment; that stretch reads QFHVIIVGGSIAGLTLAHCLH. The FAD site is built by glutamate 35, glycine 49, arginine 108, aspartate 299, and alanine 312. The helical transmembrane segment at 435 to 455 threads the bilayer; that stretch reads VLVLLLSALTWSCLGNMNIIM.

The protein belongs to the paxM FAD-dependent monooxygenase family. The cofactor is FAD.

The protein resides in the membrane. It participates in secondary metabolite biosynthesis. Its function is as follows. FAD-dependent monooxygenase; part of the gene cluster that mediates the biosynthesis of the indole diterpenes penitrems. The geranylgeranyl diphosphate (GGPP) synthase penG catalyzes the first step in penitrem biosynthesis via conversion of farnesyl pyrophosphate and isopentyl pyrophosphate into geranylgeranyl pyrophosphate (GGPP). Condensation of indole-3-glycerol phosphate with GGPP by the prenyl transferase penC then forms 3-geranylgeranylindole (3-GGI). Epoxidation by the FAD-dependent monooxygenase penM leads to a epoxidized-GGI that is substrate of the terpene cyclase penB for cyclization to yield paspaline. Paspaline is subsequently converted to 13-desoxypaxilline by the cytochrome P450 monooxygenase penP, the latter being then converted to paxilline by the cytochrome P450 monooxygenase penQ. Paxilline is converted to beta-paxitriol via C-10 ketoreduction by the short-chain dehydrogenase PC-15 which can be monoprenylated at the C-20 by the indole diterpene prenyltransferase penD. A two-step elimination (acetylation and elimination) process performed by the O-acetyltransferase PC-16 and the P.simplicissimum ptmI-ortholog not yet identified in P.crustosum, leads to the production of the prenylated form of penijanthine. The FAD-linked oxidoreductase ptmO then converts the prenylated form of penijanthine into PC-M5 which is in turn transformed into PC-M4 by the aromatic dimethylallyltransferase PC-22. A series of oxidation steps involving 4 cytochrome P450 monooxygenases (PC-21, PC-05, PC-23, PC-20) and a FAD-dependent monooxygenase (PC-14) are required for the transformation of PC-M4 to penitrems A and E. Synthesis of these final products is proposed to proceed via penitrems D and C (PC-21, PC-05, PC-14) and penitrems B and F (PC-21, PC-05, PC-14, PC-23). The polypeptide is FAD-dependent monooxygenase penM (Penicillium crustosum (Blue mold fungus)).